We begin with the raw amino-acid sequence, 317 residues long: Transaldolase (317 aa).

The Schiff-base intermediate with substrate role is filled by lysine 132.

It belongs to the transaldolase family. Type 1 subfamily. Homodimer.

The protein resides in the cytoplasm. It carries out the reaction D-sedoheptulose 7-phosphate + D-glyceraldehyde 3-phosphate = D-erythrose 4-phosphate + beta-D-fructose 6-phosphate. It participates in carbohydrate degradation; pentose phosphate pathway; D-glyceraldehyde 3-phosphate and beta-D-fructose 6-phosphate from D-ribose 5-phosphate and D-xylulose 5-phosphate (non-oxidative stage): step 2/3. Its function is as follows. Transaldolase is important for the balance of metabolites in the pentose-phosphate pathway. The polypeptide is Transaldolase (Shewanella denitrificans (strain OS217 / ATCC BAA-1090 / DSM 15013)).